A 306-amino-acid polypeptide reads, in one-letter code: Methionyl-tRNA formyltransferase (306 aa).

110 to 113 (SLLP) contributes to the (6S)-5,6,7,8-tetrahydrofolate binding site.

The protein belongs to the Fmt family.

It catalyses the reaction L-methionyl-tRNA(fMet) + (6R)-10-formyltetrahydrofolate = N-formyl-L-methionyl-tRNA(fMet) + (6S)-5,6,7,8-tetrahydrofolate + H(+). In terms of biological role, attaches a formyl group to the free amino group of methionyl-tRNA(fMet). The formyl group appears to play a dual role in the initiator identity of N-formylmethionyl-tRNA by promoting its recognition by IF2 and preventing the misappropriation of this tRNA by the elongation apparatus. This Brucella abortus (strain S19) protein is Methionyl-tRNA formyltransferase.